The primary structure comprises 577 residues: BICD family-like cargo adapter 1 (577 aa).

The interval 63 to 100 (LLAAGERSSEPGEHPQAEPESPVEGHGPPLPPPPTQDP) is disordered. A compositionally biased stretch (basic and acidic residues) spans 69–79 (RSSEPGEHPQA). Positions 116–120 (AARLG) match the CC1 box motif. Residues 121–379 (KALLERNQDM…QLWEAYCQVR (259 aa)) are a coiled coil. The disordered stretch occupies residues 389–415 (DSADSAVSTDSSMDESSETSSAKDVPA). Residues 390-399 (SADSAVSTDS) show a composition bias toward low complexity. Residues 443 to 528 (LSVEMTALKE…LEAWQDDMHR (86 aa)) are a coiled coil.

This sequence belongs to the BICDR family. In terms of assembly, part of a tripartite complex with dynein and dynactin, acts an adapter linking the dynein motor complex and dynactin. Interacts with KIF1C. Interacts with RAB6A and RAB6B; interaction is specific to Rab6. In terms of tissue distribution, highly expressed during early embryonic development. Predominantly expressed in kidney, undifferentiated neural tissue and developing eye.

It is found in the cytoplasm. The protein localises to the cytoskeleton. The protein resides in the microtubule organizing center. It localises to the centrosome. Acts as an adapter protein linking the dynein motor complex to various cargos and converts dynein from a non-processive to a highly processive motor in the presence of dynactin. Facilitates the interaction between dynein and dynactin and activates dynein processivity (the ability to move along a microtubule for a long distance without falling off the track). Predominantly recruits 2 dyneins, which increases both the force and speed of the microtubule motor. Component of secretory vesicle machinery in developing neurons that acts as a regulator of neurite outgrowth. Regulates the secretory vesicle transport by controlling the accumulation of Rab6-containing secretory vesicles in the pericentrosomal region restricting anterograde secretory transport during the early phase of neuronal differentiation, thereby inhibiting neuritogenesis. This chain is BICD family-like cargo adapter 1 (Bicdl1), found in Mus musculus (Mouse).